The following is a 361-amino-acid chain: Allatostatin-A receptor (361 aa).

The Extracellular portion of the chain corresponds to 1–46; it reads MESTEDEFYTICLNLTAEDPSFGNCNYTTDFENGELLEKVVSRVVP. Residues asparagine 14 and asparagine 26 are each glycosylated (N-linked (GlcNAc...) asparagine). Residues 47–67 traverse the membrane as a helical segment; the sequence is IFFGFIGIVGLVGNALVVLVV. Topologically, residues 68–78 are cytoplasmic; the sequence is AANPGMRSTTN. A helical transmembrane segment spans residues 79 to 99; sequence LLIINLAVADLLFVIFCVPFT. The Extracellular segment spans residues 100 to 116; that stretch reads ATDYVMPRWPFGDWWCK. Cysteine 115 and cysteine 196 are oxidised to a cystine. A helical membrane pass occupies residues 117–137; the sequence is VVQYFIVVTAHASVYTLVLMS. At 138-158 the chain is on the cytoplasmic side; it reads LDRFMAVVHPIASMSIRTEKN. Residues 159–179 traverse the membrane as a helical segment; the sequence is ALLAIACIWVVILTTAIPVGI. At 180-212 the chain is on the extracellular side; it reads CHGEREYSYFNRNHSSCVFLEERGYSKLGFQMS. The N-linked (GlcNAc...) asparagine glycan is linked to asparagine 192. The chain crosses the membrane as a helical span at residues 213–233; that stretch reads FFLSSYVIPLALISVLYMCML. At 234–259 the chain is on the cytoplasmic side; it reads TRLWKSAPGGRVSAESRRGRKKVTRM. A helical transmembrane segment spans residues 260-280; it reads VVVVVVVFAVCWCPIQIILLV. The Extracellular segment spans residues 281-296; sequence KALNKYHITYFTVTAQ. Residues 297–317 traverse the membrane as a helical segment; it reads IVSHVLAYMNSCVNPVLYAFL. Topologically, residues 318-361 are cytoplasmic; the sequence is SENFRVAFRKVMYCPPPYNDGFSGRPQATKTTRTGNGNSCHDIV. Residues 341–361 are disordered; that stretch reads GRPQATKTTRTGNGNSCHDIV. The segment covering 343-361 has biased composition (polar residues); it reads PQATKTTRTGNGNSCHDIV.

This sequence belongs to the G-protein coupled receptor 1 family. Expressed in the midgut and, to a lesser extent, in the fore- and hindgut of fifth instar larvae. Also highly expressed in the brain of fourth and fifth instar larvae.

The protein resides in the cell membrane. Acts as a receptor for A-type allatostatin neuropeptide hormones. The polypeptide is Allatostatin-A receptor (Bombyx mori (Silk moth)).